A 397-amino-acid chain; its full sequence is Succinate--CoA ligase [ADP-forming] subunit beta (397 aa).

Positions 9-254 constitute an ATP-grasp domain; it reads KALLKSFGAP…KSEEDEKEIQ (246 aa). ATP is bound by residues Lys46, 53–55, Glu109, Ala112, and Glu117; that span reads GRG. Asn209 and Asp223 together coordinate Mg(2+). Substrate contacts are provided by residues Asn274 and 331 to 333; that span reads GIM.

It belongs to the succinate/malate CoA ligase beta subunit family. Heterotetramer of two alpha and two beta subunits. The cofactor is Mg(2+).

The catalysed reaction is succinate + ATP + CoA = succinyl-CoA + ADP + phosphate. It carries out the reaction GTP + succinate + CoA = succinyl-CoA + GDP + phosphate. It functions in the pathway carbohydrate metabolism; tricarboxylic acid cycle; succinate from succinyl-CoA (ligase route): step 1/1. Succinyl-CoA synthetase functions in the citric acid cycle (TCA), coupling the hydrolysis of succinyl-CoA to the synthesis of either ATP or GTP and thus represents the only step of substrate-level phosphorylation in the TCA. The beta subunit provides nucleotide specificity of the enzyme and binds the substrate succinate, while the binding sites for coenzyme A and phosphate are found in the alpha subunit. The protein is Succinate--CoA ligase [ADP-forming] subunit beta of Rhizobium rhizogenes (strain K84 / ATCC BAA-868) (Agrobacterium radiobacter).